We begin with the raw amino-acid sequence, 491 residues long: Ketol-acid reductoisomerase (NADP(+)) (491 aa).

A KARI N-terminal Rossmann domain is found at 15–208; it reads AQLGKCRFMG…GGHRAGVLES (194 aa). NADP(+)-binding positions include 45–48, Arg-68, Arg-76, Ser-78, and 108–110; these read CGAQ and DKQ. Residue His-132 is part of the active site. An NADP(+)-binding site is contributed by Gly-158. KARI C-terminal knotted domains lie at 209-344 and 345-484; these read SFVA…TAPQ and FEGK…MTDM. Mg(2+)-binding residues include Asp-217, Glu-221, Glu-389, and Glu-393. Ser-414 contacts substrate.

The protein belongs to the ketol-acid reductoisomerase family. It depends on Mg(2+) as a cofactor.

The catalysed reaction is (2R)-2,3-dihydroxy-3-methylbutanoate + NADP(+) = (2S)-2-acetolactate + NADPH + H(+). It carries out the reaction (2R,3R)-2,3-dihydroxy-3-methylpentanoate + NADP(+) = (S)-2-ethyl-2-hydroxy-3-oxobutanoate + NADPH + H(+). It participates in amino-acid biosynthesis; L-isoleucine biosynthesis; L-isoleucine from 2-oxobutanoate: step 2/4. It functions in the pathway amino-acid biosynthesis; L-valine biosynthesis; L-valine from pyruvate: step 2/4. In terms of biological role, involved in the biosynthesis of branched-chain amino acids (BCAA). Catalyzes an alkyl-migration followed by a ketol-acid reduction of (S)-2-acetolactate (S2AL) to yield (R)-2,3-dihydroxy-isovalerate. In the isomerase reaction, S2AL is rearranged via a Mg-dependent methyl migration to produce 3-hydroxy-3-methyl-2-ketobutyrate (HMKB). In the reductase reaction, this 2-ketoacid undergoes a metal-dependent reduction by NADPH to yield (R)-2,3-dihydroxy-isovalerate. This chain is Ketol-acid reductoisomerase (NADP(+)), found in Salmonella choleraesuis (strain SC-B67).